Reading from the N-terminus, the 1583-residue chain is Methyl-CpG-binding domain protein 5/6 homolog sba (1583 aa).

Residues 81–115 are disordered; sequence AVHQQQQQHHHQQQQQQQHQQQQQILPAGLVNGNG. The segment covering 83–104 has biased composition (low complexity); it reads HQQQQQHHHQQQQQQQHQQQQQ. The region spanning 238–308 is the MBD domain; that stretch reads RKTATSYNGN…YLFDFNAQVP (71 aa). Disordered regions lie at residues 427 to 457, 556 to 579, 630 to 694, 839 to 862, 940 to 980, 1179 to 1247, and 1287 to 1339; these read NKLPATNRTATTPTPAPTPPPQHPNGMPTSQ, EPIVHSSQQQQQQQQQQLQQQQQL, VTLV…QTQV, AELHPQPGGGYIVSQPSPVAAASS, PPAQ…ISPQ, VMSR…RSIC, and QESP…SFPL. Low complexity predominate over residues 430-439; it reads PATNRTATTP. The span at 440 to 449 shows a compositional bias: pro residues; sequence TPAPTPPPQH. Residues 563–579 are compositionally biased toward low complexity; that stretch reads QQQQQQQQQQLQQQQQL. A compositionally biased stretch (polar residues) spans 658–677; the sequence is AISTSHESPRQSLSSPTDSV. Low complexity-rich tracts occupy residues 679-693 and 851-862; these read SAKSTPSASPKPQTQ and VSQPSPVAAASS. Polar residues-rich tracts occupy residues 1179–1195, 1216–1240, and 1287–1313; these read VMSRQGTAASPPDTTTC, CVSSSEPDAAVSPQSTESRQSPSST, and QESPTTTQLLSSVPTAQPTVEKTTVRT. The span at 1323–1333 shows a compositional bias: low complexity; the sequence is RGAARAAPSAS. The region spanning 1346–1408 is the PWWP domain; sequence IGELIWGPAR…VNSLQSLSEG (63 aa). Residues 1415–1446 are a coiled coil; that stretch reads AQKDTRKSRKLNSQLERAIQEAMTELDNISAS. Residues 1471–1497 form a disordered region; that stretch reads IGGQQQYQQQQQQQQQQQSPSSTNNKI. The segment covering 1474–1488 has biased composition (low complexity); the sequence is QQQYQQQQQQQQQQQ.

In terms of assembly, component of the polycomb repressive deubiquitinase (PR-DUB) complex, at least composed of caly/calypso, Asx and sba (MDB5/6 homolog). Interacts (via MBD domain) with Asx (via PHD domain); the interaction is important for the stability of the PR-DUB complex.

Its function is as follows. Non-catalytic component of the polycomb repressive deubiquitinase (PR-DUB) complex, a complex that specifically mediates deubiquitination of histone H2A monoubiquitinated at 'Lys-119' (H2AK118ub1). Important for maintaining stability of the PR-DUB complex. Probable epigenetic regulator involved in developmental pattern formation and eye development. This Drosophila melanogaster (Fruit fly) protein is Methyl-CpG-binding domain protein 5/6 homolog sba.